Consider the following 380-residue polypeptide: Deoxyguanosinetriphosphate triphosphohydrolase-like protein (380 aa).

An HD domain is found at 79–196; sequence RLTHTLEVQQ…VDAADALAYT (118 aa).

It belongs to the dGTPase family. Type 2 subfamily.

The polypeptide is Deoxyguanosinetriphosphate triphosphohydrolase-like protein (Deinococcus deserti (strain DSM 17065 / CIP 109153 / LMG 22923 / VCD115)).